A 46-amino-acid chain; its full sequence is Mu-hexatoxin-Mg2a (46 aa).

Intrachain disulfides connect cysteine 3–cysteine 18, cysteine 10–cysteine 24, cysteine 17–cysteine 36, cysteine 21–cysteine 43, and cysteine 26–cysteine 34.

The protein belongs to the neurotoxin 02 (plectoxin) family. 02 (plectoxin) subfamily. As to expression, expressed by the venom gland.

Its subcellular location is the secreted. Functionally, competes for binding at site 3 of the insect voltage-gated sodium channel (Nav). Insecticidal neurotoxin. Causes temporary paralysis to lepidopteran larvae (10.3 nmol/g) or to crickets (doses from 0.93 to 119 ug/g). Is not toxic to mice when injected intracranially (high doses). The polypeptide is Mu-hexatoxin-Mg2a (Macrothele gigas (Japanese funnel web spider)).